The sequence spans 143 residues: UPF0047 protein MTH_771 (143 aa).

Belongs to the UPF0047 family.

This Methanothermobacter thermautotrophicus (strain ATCC 29096 / DSM 1053 / JCM 10044 / NBRC 100330 / Delta H) (Methanobacterium thermoautotrophicum) protein is UPF0047 protein MTH_771.